Consider the following 144-residue polypeptide: MRLNTLSPAEGSKKAGKRLGRGIGSGLGKTGGRGHKGQKSRSGGGVRRGFEGGQMPLYRRLPKFGFTSRKAAITAEIRLSDLAKVEGGVVDLNTLKAANIIGIQIEFAKVILAGEVTTPVTVRGLRVTKGARAAIEAAGGKIEE.

The tract at residues 1–54 (MRLNTLSPAEGSKKAGKRLGRGIGSGLGKTGGRGHKGQKSRSGGGVRRGFEGGQ) is disordered. The span at 21–31 (RGIGSGLGKTG) shows a compositional bias: gly residues.

Belongs to the universal ribosomal protein uL15 family. Part of the 50S ribosomal subunit.

In terms of biological role, binds to the 23S rRNA. The chain is Large ribosomal subunit protein uL15 from Escherichia coli (strain K12 / MC4100 / BW2952).